The following is a 155-amino-acid chain: Cyanate hydratase (155 aa).

Catalysis depends on residues R95, E98, and S121.

This sequence belongs to the cyanase family.

The enzyme catalyses cyanate + hydrogencarbonate + 3 H(+) = NH4(+) + 2 CO2. Catalyzes the reaction of cyanate with bicarbonate to produce ammonia and carbon dioxide. This chain is Cyanate hydratase, found in Pseudomonas syringae pv. tomato (strain ATCC BAA-871 / DC3000).